The sequence spans 108 residues: uncharacterized protein (108 aa).

An N-linked (GlcNAc...) asparagine glycan is attached at N33.

N-glycosylated.

This is an uncharacterized protein from Saccharomyces cerevisiae (strain ATCC 204508 / S288c) (Baker's yeast).